The primary structure comprises 285 residues: SLAM family member 9 (285 aa).

A signal peptide spans 1–17 (MGALLWSLLLLLQEAKG). The Extracellular portion of the chain corresponds to 18–232 (FSGDDEDPEE…YPEKPSMLCL (215 aa)). An Ig-like V-type domain is found at 25-126 (PEEVIGVLQE…SHITKSYHLR (102 aa)). N37, N97, N141, N149, N175, and N206 each carry an N-linked (GlcNAc...) asparagine glycan. The Ig-like C2-type domain maps to 134-213 (PHITVNSNIS…VSNISSRRIS (80 aa)). Cysteines 154 and 198 form a disulfide. The helical transmembrane segment at 233 to 253 (LVKSLFLLLLLAILTVGLCLF) threads the bilayer. The Cytoplasmic segment spans residues 254–285 (RAQKSYETPRVRKLKRNRIKLRKKGKSGPTPV).

Its subcellular location is the membrane. May play a role in the immune response. This Mus musculus (Mouse) protein is SLAM family member 9 (Slamf9).